The sequence spans 118 residues: NADH-quinone oxidoreductase subunit A (118 aa).

Helical transmembrane passes span 8-28, 61-81, and 86-106; these read ILIFFLTGFFLSIIILVLNYL, FMYALVFVLFDVETIFLYPWA, and VLGLFAFVEMVIFIGILVLGL.

This sequence belongs to the complex I subunit 3 family. NDH-1 is composed of 14 different subunits. Subunits NuoA, H, J, K, L, M, N constitute the membrane sector of the complex.

Its subcellular location is the cell membrane. It catalyses the reaction a quinone + NADH + 5 H(+)(in) = a quinol + NAD(+) + 4 H(+)(out). Its function is as follows. NDH-1 shuttles electrons from NADH, via FMN and iron-sulfur (Fe-S) centers, to quinones in the respiratory chain. The immediate electron acceptor for the enzyme in this species is believed to be a menaquinone. Couples the redox reaction to proton translocation (for every two electrons transferred, four hydrogen ions are translocated across the cytoplasmic membrane), and thus conserves the redox energy in a proton gradient. This chain is NADH-quinone oxidoreductase subunit A, found in Carboxydothermus hydrogenoformans (strain ATCC BAA-161 / DSM 6008 / Z-2901).